Reading from the N-terminus, the 72-residue chain is Translation initiation factor IF-1 (72 aa).

Positions 1-72 (MAKDDVIVVD…DKGRITHRYK (72 aa)) constitute an S1-like domain.

This sequence belongs to the IF-1 family. As to quaternary structure, component of the 30S ribosomal translation pre-initiation complex which assembles on the 30S ribosome in the order IF-2 and IF-3, IF-1 and N-formylmethionyl-tRNA(fMet); mRNA recruitment can occur at any time during PIC assembly.

Its subcellular location is the cytoplasm. In terms of biological role, one of the essential components for the initiation of protein synthesis. Stabilizes the binding of IF-2 and IF-3 on the 30S subunit to which N-formylmethionyl-tRNA(fMet) subsequently binds. Helps modulate mRNA selection, yielding the 30S pre-initiation complex (PIC). Upon addition of the 50S ribosomal subunit IF-1, IF-2 and IF-3 are released leaving the mature 70S translation initiation complex. The protein is Translation initiation factor IF-1 of Aliarcobacter butzleri (strain RM4018) (Arcobacter butzleri).